The following is a 145-amino-acid chain: Major pollen allergen Lig v 1 (145 aa).

3 disulfide bridges follow: Cys19–Cys90, Cys22–Cys131, and Cys43–Cys78. A glycan (N-linked (GlcNAc...) asparagine) is linked at Asn111.

It belongs to the Ole e I family.

It is found in the secreted. This Ligustrum vulgare (Common privet) protein is Major pollen allergen Lig v 1.